A 166-amino-acid chain; its full sequence is Transcription antitermination protein NusB (166 aa).

Over residues 1 to 15 (MISDDSDRFNPRDPK) the composition is skewed to basic and acidic residues. Residues 1-30 (MISDDSDRFNPRDPKPANAGKPSKSAKRRE) form a disordered region.

This sequence belongs to the NusB family.

Involved in transcription antitermination. Required for transcription of ribosomal RNA (rRNA) genes. Binds specifically to the boxA antiterminator sequence of the ribosomal RNA (rrn) operons. In Pseudomonas fluorescens (strain ATCC BAA-477 / NRRL B-23932 / Pf-5), this protein is Transcription antitermination protein NusB.